The sequence spans 129 residues: Small ribosomal subunit protein uS11 (129 aa).

The protein belongs to the universal ribosomal protein uS11 family. Part of the 30S ribosomal subunit. Interacts with proteins S7 and S18. Binds to IF-3.

Its function is as follows. Located on the platform of the 30S subunit, it bridges several disparate RNA helices of the 16S rRNA. Forms part of the Shine-Dalgarno cleft in the 70S ribosome. The chain is Small ribosomal subunit protein uS11 from Stenotrophomonas maltophilia (strain R551-3).